The sequence spans 147 residues: MKLNNSLLLLIVAIIASSNAAETFSNFQVTNSEASSPCVTTPVELKVNTCQSACDSILNVLPVTGSTSKFTFNQFGAQDTKCAATPTSSNEFTCVDGKSKVAIGTTTYSVVCVPDKTNSSESDSSDSTRIGASFALFALALLSMLAL.

Positions 1 to 20 (MKLNNSLLLLIVAIIASSNA) are cleaved as a signal peptide. The GPI-like-anchor amidated asparagine moiety is linked to residue Asn118. N-linked (GlcNAc...) asparagine glycosylation is present at Asn118. Residues 119–147 (SSESDSSDSTRIGASFALFALALLSMLAL) constitute a propeptide, removed in mature form.

This sequence belongs to the ponticulin family. In terms of processing, the GPI-like-anchor contains a phosphoceramide group, rather than a phosphatidyl group.

It is found in the cell membrane. The sequence is that of Ponticulin-like protein C5 (ponC5) from Dictyostelium discoideum (Social amoeba).